Here is a 100-residue protein sequence, read N- to C-terminus: NADH-quinone oxidoreductase subunit K (100 aa).

Transmembrane regions (helical) follow at residues 3 to 23, 29 to 49, and 60 to 80; these read LNAYLVLAAMLFTIGVFGIFL, ISIMMSIELMLLAVNINFVAF, and IFTFFVVTVAAAEAAIGLAIL.

Belongs to the complex I subunit 4L family. NDH-1 is composed of 14 different subunits. Subunits NuoA, H, J, K, L, M, N constitute the membrane sector of the complex.

Its subcellular location is the cell inner membrane. The enzyme catalyses a quinone + NADH + 5 H(+)(in) = a quinol + NAD(+) + 4 H(+)(out). Its function is as follows. NDH-1 shuttles electrons from NADH, via FMN and iron-sulfur (Fe-S) centers, to quinones in the respiratory chain. The immediate electron acceptor for the enzyme in this species is believed to be ubiquinone. Couples the redox reaction to proton translocation (for every two electrons transferred, four hydrogen ions are translocated across the cytoplasmic membrane), and thus conserves the redox energy in a proton gradient. The chain is NADH-quinone oxidoreductase subunit K from Magnetococcus marinus (strain ATCC BAA-1437 / JCM 17883 / MC-1).